Consider the following 452-residue polypeptide: PTS system N-acetylglucosamine-specific EIICB component (452 aa).

One can recognise a PTS EIIC type-1 domain in the interval 1–361 (MLSFLQKLGK…LNLKTPGRED (361 aa)). A run of 9 helical transmembrane segments spans residues 8-28 (LGKS…ILAL), 42-62 (AGTA…AIGI), 91-111 (TNNM…YTYN), 130-150 (LVPI…GVVW), 163-183 (WMLG…RLLI), 223-243 (MTGF…AMVV), 257-277 (MIGF…EFAF), 279-299 (FLSP…LFIV), and 329-349 (LLLL…YVLI). In terms of domain architecture, PTS EIIB type-1 spans 375–452 (DVNENIMLKG…AAEELRAAVK (78 aa)). Cys397 acts as the Phosphocysteine intermediate; for EIIB activity in catalysis.

As to quaternary structure, interacts with FloT.

It localises to the cell membrane. Its subcellular location is the membrane raft. It carries out the reaction N(pros)-phospho-L-histidyl-[protein] + N-acetyl-D-glucosamine(out) = N-acetyl-D-glucosamine 6-phosphate(in) + L-histidyl-[protein]. Its function is as follows. The phosphoenolpyruvate-dependent sugar phosphotransferase system (sugar PTS), a major carbohydrate active -transport system, catalyzes the phosphorylation of incoming sugar substrates concomitantly with their translocation across the cell membrane. This system is involved in N-acetylglucosamine transport. In Bacillus subtilis (strain 168), this protein is PTS system N-acetylglucosamine-specific EIICB component (nagP).